The sequence spans 155 residues: Ribosome maturation factor RimP (155 aa).

This sequence belongs to the RimP family.

The protein resides in the cytoplasm. Functionally, required for maturation of 30S ribosomal subunits. This is Ribosome maturation factor RimP from Staphylococcus epidermidis (strain ATCC 35984 / DSM 28319 / BCRC 17069 / CCUG 31568 / BM 3577 / RP62A).